A 101-amino-acid chain; its full sequence is Small ribosomal subunit protein uS10 (101 aa).

It belongs to the universal ribosomal protein uS10 family. As to quaternary structure, part of the 30S ribosomal subunit.

Its function is as follows. Involved in the binding of tRNA to the ribosomes. This chain is Small ribosomal subunit protein uS10, found in Bacteroides fragilis (strain ATCC 25285 / DSM 2151 / CCUG 4856 / JCM 11019 / LMG 10263 / NCTC 9343 / Onslow / VPI 2553 / EN-2).